The primary structure comprises 308 residues: Glutamyl-Q tRNA(Asp) synthetase (308 aa).

Residues 19–23 (RFAPS) and Glu-55 contribute to the L-glutamate site. The 'HIGH' region motif lies at 22–32 (PSPSGELHFGS). Zn(2+) is bound by residues Cys-111, Cys-113, Tyr-125, and Cys-129. L-glutamate contacts are provided by Tyr-182 and Arg-200. The 'KMSKS' region signature appears at 238-242 (KLSKQ). Lys-241 is an ATP binding site.

It belongs to the class-I aminoacyl-tRNA synthetase family. GluQ subfamily. It depends on Zn(2+) as a cofactor.

Catalyzes the tRNA-independent activation of glutamate in presence of ATP and the subsequent transfer of glutamate onto a tRNA(Asp). Glutamate is transferred on the 2-amino-5-(4,5-dihydroxy-2-cyclopenten-1-yl) moiety of the queuosine in the wobble position of the QUC anticodon. The chain is Glutamyl-Q tRNA(Asp) synthetase from Escherichia coli (strain K12 / MC4100 / BW2952).